A 1327-amino-acid polypeptide reads, in one-letter code: Myb-like protein O (1327 aa).

Over residues 131–142 the composition is skewed to low complexity; the sequence is NNNINTTNNNNK. 4 disordered regions span residues 131-153, 263-390, 504-668, and 717-770; these read NNNI…EESN, EEED…DESS, PPQQ…NHES, and KKKK…DNDD. Residues 263-283 show a composition bias toward acidic residues; sequence EEEDDEDYIPPEEEEDDDEDN. The segment covering 322 to 353 has biased composition (low complexity); the sequence is YNNTANNINNNNIGDESDNNNNNNNNINNNSN. Residues 356-374 show a composition bias toward acidic residues; that stretch reads DDDDDDDDDNNDDDDDDND. The span at 511–532 shows a compositional bias: low complexity; the sequence is SSSSINSSNTMSSSSSSSSLSK. Residues 533–542 show a composition bias toward basic residues; the sequence is NKLKKKKKEE. A compositionally biased stretch (basic and acidic residues) spans 543-554; that stretch reads KRKEEKRKEEKR. The span at 555 to 577 shows a compositional bias: basic residues; sequence KEKKRKKRQSITISKFKKNKKKT. Positions 585–606 are enriched in acidic residues; it reads SESDSSSDDSDDSDFYYSDIEE. A compositionally biased stretch (gly residues) spans 607 to 619; it reads GGGGNGNGSGSGV. Residues 624-633 show a composition bias toward acidic residues; the sequence is SDNEEGDSSS. 2 stretches are compositionally biased toward low complexity: residues 646–668 and 722–732; these read HTNN…NHES and QSSSSSSSSTI. Residues 754-770 are compositionally biased toward acidic residues; it reads NDDEDDNNNNNEDDNDD. Residues 897 to 953 form the HTH myb-type domain; the sequence is NVKLNQLKFTGGEDLLLLMGVKRFGTFNWRIIQKRYFPNKTDDQLFHRYKNLLSHSS. The H-T-H motif DNA-binding region spans 925–949; sequence WRIIQKRYFPNKTDDQLFHRYKNLL. The Myb-like 1 domain maps to 959–1010; it reads KQYLNGAKFTKEEEEKLDGAIKIHGLKWDIISRDYLHWKEPAMLKKFYEKRE. 2 stretches are compositionally biased toward low complexity: residues 1061–1118 and 1144–1160; these read NSTN…NENN and PIIE…ETSP. Disordered stretches follow at residues 1061–1122 and 1144–1168; these read NSTN…YEFG and PIIE…PCPI. Positions 1268-1316 constitute a Myb-like 2 domain; sequence KWTREEDRIILITVKEKGTVDNEIWKSLSDTKIQDKTPDQIMYRYLQLL.

It localises to the nucleus. This Dictyostelium discoideum (Social amoeba) protein is Myb-like protein O (mybO).